The primary structure comprises 354 residues: S-adenosylmethionine:tRNA ribosyltransferase-isomerase (354 aa).

The protein belongs to the QueA family. As to quaternary structure, monomer.

Its subcellular location is the cytoplasm. It catalyses the reaction 7-aminomethyl-7-carbaguanosine(34) in tRNA + S-adenosyl-L-methionine = epoxyqueuosine(34) in tRNA + adenine + L-methionine + 2 H(+). It functions in the pathway tRNA modification; tRNA-queuosine biosynthesis. In terms of biological role, transfers and isomerizes the ribose moiety from AdoMet to the 7-aminomethyl group of 7-deazaguanine (preQ1-tRNA) to give epoxyqueuosine (oQ-tRNA). This chain is S-adenosylmethionine:tRNA ribosyltransferase-isomerase, found in Methylobacterium radiotolerans (strain ATCC 27329 / DSM 1819 / JCM 2831 / NBRC 15690 / NCIMB 10815 / 0-1).